Here is a 530-residue protein sequence, read N- to C-terminus: Netrin-G2 (530 aa).

An N-terminal signal peptide occupies residues 1-17 (MLHLLALFLHCLPLASG). 3 disulfides stabilise this stretch: Cys22-Cys39, Cys61-Cys81, and Cys69-Cys77. Residues 35–286 (EFYACQPKVM…AISNIEVIGR (252 aa)) enclose the Laminin N-terminal domain. The tract at residues 69–88 (CSHENPYLCSNECDASNPDL) is NGL discriminant loop I. N-linked (GlcNAc...) asparagine glycans are attached at residues Asn122 and Asn128. Cys171 and Cys195 are oxidised to a cystine. The interval 201–203 (RWA) is NGL discriminant loop II. The NGL discriminant loop III stretch occupies residues 264–267 (TYVQ). 15 disulfide bridges follow: Cys287-Cys296, Cys289-Cys305, Cys307-Cys316, Cys319-Cys344, Cys353-Cys362, Cys355-Cys373, Cys376-Cys385, Cys388-Cys406, Cys409-Cys421, Cys411-Cys427, Cys429-Cys438, Cys441-Cys451, Cys456-Cys469, Cys463-Cys475, and Cys477-Cys486. Laminin EGF-like domains lie at 287–346 (CKCN…ACAT), 353–408 (CECY…VCIE), and 409–453 (CNCN…GCYP). Residue Asn310 is glycosylated (N-linked (GlcNAc...) asparagine). N-linked (GlcNAc...) asparagine glycosylation occurs at Asn395. N-linked (GlcNAc...) asparagine glycosylation is present at Asn422. Gly507 is lipidated: GPI-anchor amidated glycine. Positions 508–530 (AAPRPATLLGCLLLLGLAARLGR) are cleaved as a propeptide — removed in mature form.

Interacts with LRRC4. In terms of processing, N-glycosylated.

It is found in the cell membrane. Involved in controlling patterning and neuronal circuit formation at the laminar, cellular, subcellular and synaptic levels. Promotes neurite outgrowth of both axons and dendrites. This is Netrin-G2 from Homo sapiens (Human).